We begin with the raw amino-acid sequence, 364 residues long: Melatonin receptor type 1B (364 aa).

Residues 1–28 (MPDNSSIANCCAASGLAARPSWPGSAEA) form the signal peptide. The Extracellular portion of the chain corresponds to 29 to 45 (EPPETPRAPWVAPMLST). The chain crosses the membrane as a helical span at residues 46 to 66 (VVIVTTAVDFVGNLLVILSVL). Over 67–81 (RNRKLRNAGNLFVVN) the chain is Cytoplasmic. Residues 82 to 102 (LALADLVVALYPYPLILVAIL) form a helical membrane-spanning segment. The Extracellular segment spans residues 103–115 (HDGWVLGEIHCKA). The cysteines at positions 113 and 190 are disulfide-linked. The chain crosses the membrane as a helical span at residues 116-136 (SAFVMGLSVIGSVFNITAIAI). The Cytoplasmic segment spans residues 137–158 (NRYWCICHSATYHRACSQWHAP). The helical transmembrane segment at 159–179 (LYISLIWLLTLVALVPNFFVG) threads the bilayer. The Extracellular portion of the chain corresponds to 180-200 (SLEYDPRIYSCTFIQTASTQY). Residues 201–221 (TMAVVAIHFLLPIAVVSFCYL) form a helical membrane-spanning segment. The Cytoplasmic segment spans residues 222 to 255 (RIWILVLQARRKAKAERKLRLRPSDLRSFLTMFA). A helical membrane pass occupies residues 256-276 (VFVVFAICWAPLNCIGLAVAI). Residues 277–287 (NPEAMALQIPE) lie on the Extracellular side of the membrane. The helical transmembrane segment at 288–308 (GLFVTSYFLAYFNSCLNAIVY) threads the bilayer. Residues 309–364 (GLLNQNFRREYKRILSALWSTGRCFHDASKCHLTEDLQGPVPPAAMATIPVQEGAL) lie on the Cytoplasmic side of the membrane.

The protein belongs to the G-protein coupled receptor 1 family. In terms of tissue distribution, expressed in the hippocampus, kidney, and ovary.

It localises to the cell membrane. Functionally, high affinity receptor for melatonin. The activity of this receptor is mediated by pertussis toxin sensitive G proteins that inhibits adenylate cyclase activity. This Rattus norvegicus (Rat) protein is Melatonin receptor type 1B.